Here is a 233-residue protein sequence, read N- to C-terminus: ATP synthase subunit a (233 aa).

7 helical membrane-spanning segments follow: residues 29 to 49 (FKHV…SFIV), 60 to 80 (LQNI…SITG), 89 to 109 (VLIV…VPGF), 115 to 135 (NINT…YIGI), 143 to 163 (IKHF…LELI), 185 to 205 (FVLI…IYFL), and 206 to 226 (FTLA…IYLK).

The protein belongs to the ATPase A chain family. As to quaternary structure, F-type ATPases have 2 components, CF(1) - the catalytic core - and CF(0) - the membrane proton channel. CF(1) has five subunits: alpha(3), beta(3), gamma(1), delta(1), epsilon(1). CF(0) has three main subunits: a(1), b(2) and c(9-12). The alpha and beta chains form an alternating ring which encloses part of the gamma chain. CF(1) is attached to CF(0) by a central stalk formed by the gamma and epsilon chains, while a peripheral stalk is formed by the delta and b chains.

The protein localises to the cell inner membrane. Its function is as follows. Key component of the proton channel; it plays a direct role in the translocation of protons across the membrane. This Oleidesulfovibrio alaskensis (strain ATCC BAA-1058 / DSM 17464 / G20) (Desulfovibrio alaskensis) protein is ATP synthase subunit a.